The following is a 90-amino-acid chain: Small ribosomal subunit protein bS16 (90 aa).

This sequence belongs to the bacterial ribosomal protein bS16 family.

The polypeptide is Small ribosomal subunit protein bS16 (Streptococcus equi subsp. zooepidemicus (strain H70)).